The following is a 196-amino-acid chain: Zinc finger C2H2 protein ECU03_0940 (196 aa).

2 C2H2-type zinc fingers span residues 130 to 155 and 166 to 191; these read YACEIEGCNKKYTSSFGLKYHMKEGH and YVCPFSGCDKKYKNNNGLKYHIKHYH.

The polypeptide is Zinc finger C2H2 protein ECU03_0940 (Encephalitozoon cuniculi (strain GB-M1) (Microsporidian parasite)).